Reading from the N-terminus, the 512-residue chain is Zinc finger CCCH-type with G patch domain-containing protein (512 aa).

Residues 159–186 (QEMVPCAYFLEGDCKFNDEMCRFSHGEL) form a C3H1-type zinc finger. Residues 255-280 (LEGDDVPSSDSESNSDSDEENEDDVV) form a disordered region. Residues 256–279 (EGDDVPSSDSESNSDSDEENEDDV) show a composition bias toward acidic residues. A G-patch domain is found at 308 to 354 (TKGIGSKIMLKMGYVVGAGLGSKGEGIVVPVSAQVLPQGRSLDYCMQ). Positions 407-417 (SSNGSSSSSGS) are enriched in low complexity. The interval 407–432 (SSNGSSSSSGSKKPAAKDNQMDLPSC) is disordered.

The protein resides in the nucleus. Functionally, transcription repressor. This is Zinc finger CCCH-type with G patch domain-containing protein from Aedes aegypti (Yellowfever mosquito).